Consider the following 432-residue polypeptide: UDP-N-acetylglucosamine 1-carboxyvinyltransferase (432 aa).

22-23 (KN) contributes to the phosphoenolpyruvate binding site. Arginine 102 contacts UDP-N-acetyl-alpha-D-glucosamine. The Proton donor role is filled by cysteine 126. Cysteine 126 carries the post-translational modification 2-(S-cysteinyl)pyruvic acid O-phosphothioketal. UDP-N-acetyl-alpha-D-glucosamine contacts are provided by residues 131–135 (RPVDL), aspartate 317, and isoleucine 339.

This sequence belongs to the EPSP synthase family. MurA subfamily.

Its subcellular location is the cytoplasm. The catalysed reaction is phosphoenolpyruvate + UDP-N-acetyl-alpha-D-glucosamine = UDP-N-acetyl-3-O-(1-carboxyvinyl)-alpha-D-glucosamine + phosphate. It functions in the pathway cell wall biogenesis; peptidoglycan biosynthesis. In terms of biological role, cell wall formation. Adds enolpyruvyl to UDP-N-acetylglucosamine. This chain is UDP-N-acetylglucosamine 1-carboxyvinyltransferase, found in Rhodospirillum centenum (strain ATCC 51521 / SW).